Reading from the N-terminus, the 168-residue chain is Cyclic pyranopterin monophosphate synthase (168 aa).

Substrate is bound by residues 75–77 (MCH) and 115–116 (ME). D130 is a catalytic residue.

The protein belongs to the MoaC family. As to quaternary structure, homohexamer; trimer of dimers.

It carries out the reaction (8S)-3',8-cyclo-7,8-dihydroguanosine 5'-triphosphate = cyclic pyranopterin phosphate + diphosphate. Its pathway is cofactor biosynthesis; molybdopterin biosynthesis. Functionally, catalyzes the conversion of (8S)-3',8-cyclo-7,8-dihydroguanosine 5'-triphosphate to cyclic pyranopterin monophosphate (cPMP). In Bacillus licheniformis (strain ATCC 14580 / DSM 13 / JCM 2505 / CCUG 7422 / NBRC 12200 / NCIMB 9375 / NCTC 10341 / NRRL NRS-1264 / Gibson 46), this protein is Cyclic pyranopterin monophosphate synthase.